The primary structure comprises 60 residues: Large ribosomal subunit protein uL30 (60 aa).

This sequence belongs to the universal ribosomal protein uL30 family. Part of the 50S ribosomal subunit.

In Thermus thermophilus (strain ATCC BAA-163 / DSM 7039 / HB27), this protein is Large ribosomal subunit protein uL30.